Consider the following 306-residue polypeptide: Pantothenate kinase (306 aa).

91 to 98 (GSVAVGKS) contributes to the ATP binding site.

The protein belongs to the prokaryotic pantothenate kinase family.

Its subcellular location is the cytoplasm. The catalysed reaction is (R)-pantothenate + ATP = (R)-4'-phosphopantothenate + ADP + H(+). It participates in cofactor biosynthesis; coenzyme A biosynthesis; CoA from (R)-pantothenate: step 1/5. This Streptococcus pyogenes serotype M12 (strain MGAS2096) protein is Pantothenate kinase.